Consider the following 427-residue polypeptide: tRNA(Ile)-lysidine synthase (427 aa).

ATP is bound at residue 27–32; it reads SGGVDS.

This sequence belongs to the tRNA(Ile)-lysidine synthase family.

It localises to the cytoplasm. The enzyme catalyses cytidine(34) in tRNA(Ile2) + L-lysine + ATP = lysidine(34) in tRNA(Ile2) + AMP + diphosphate + H(+). Ligates lysine onto the cytidine present at position 34 of the AUA codon-specific tRNA(Ile) that contains the anticodon CAU, in an ATP-dependent manner. Cytidine is converted to lysidine, thus changing the amino acid specificity of the tRNA from methionine to isoleucine. The polypeptide is tRNA(Ile)-lysidine synthase (Streptococcus equi subsp. equi (strain 4047)).